Reading from the N-terminus, the 728-residue chain is Phosphoribosylformylglycinamidine synthase subunit PurL (728 aa).

The active site involves H40. The ATP site is built by Y43 and K82. Mg(2+) is bound at residue E84. Substrate contacts are provided by residues 85 to 88 (SHNH) and R107. Residue H86 is the Proton acceptor of the active site. D108 provides a ligand contact to Mg(2+). Q231 provides a ligand contact to substrate. Residue D259 participates in Mg(2+) binding. Residue 303-305 (ESQ) coordinates substrate. ATP contacts are provided by N483 and G520. N521 lines the Mg(2+) pocket. Position 523 (S523) interacts with substrate.

It belongs to the FGAMS family. Monomer. Part of the FGAM synthase complex composed of 1 PurL, 1 PurQ and 2 PurS subunits.

It is found in the cytoplasm. It carries out the reaction N(2)-formyl-N(1)-(5-phospho-beta-D-ribosyl)glycinamide + L-glutamine + ATP + H2O = 2-formamido-N(1)-(5-O-phospho-beta-D-ribosyl)acetamidine + L-glutamate + ADP + phosphate + H(+). The protein operates within purine metabolism; IMP biosynthesis via de novo pathway; 5-amino-1-(5-phospho-D-ribosyl)imidazole from N(2)-formyl-N(1)-(5-phospho-D-ribosyl)glycinamide: step 1/2. In terms of biological role, part of the phosphoribosylformylglycinamidine synthase complex involved in the purines biosynthetic pathway. Catalyzes the ATP-dependent conversion of formylglycinamide ribonucleotide (FGAR) and glutamine to yield formylglycinamidine ribonucleotide (FGAM) and glutamate. The FGAM synthase complex is composed of three subunits. PurQ produces an ammonia molecule by converting glutamine to glutamate. PurL transfers the ammonia molecule to FGAR to form FGAM in an ATP-dependent manner. PurS interacts with PurQ and PurL and is thought to assist in the transfer of the ammonia molecule from PurQ to PurL. In Carboxydothermus hydrogenoformans (strain ATCC BAA-161 / DSM 6008 / Z-2901), this protein is Phosphoribosylformylglycinamidine synthase subunit PurL.